The primary structure comprises 364 residues: UDP-N-acetylglucosamine--N-acetylmuramyl-(pentapeptide) pyrophosphoryl-undecaprenol N-acetylglucosamine transferase 1 (364 aa).

UDP-N-acetyl-alpha-D-glucosamine-binding positions include 10-12, Asn-124, Ser-195, Ile-250, and Gln-295; that span reads TGG.

The protein belongs to the glycosyltransferase 28 family. MurG subfamily.

It is found in the cell membrane. The catalysed reaction is di-trans,octa-cis-undecaprenyl diphospho-N-acetyl-alpha-D-muramoyl-L-alanyl-D-glutamyl-meso-2,6-diaminopimeloyl-D-alanyl-D-alanine + UDP-N-acetyl-alpha-D-glucosamine = di-trans,octa-cis-undecaprenyl diphospho-[N-acetyl-alpha-D-glucosaminyl-(1-&gt;4)]-N-acetyl-alpha-D-muramoyl-L-alanyl-D-glutamyl-meso-2,6-diaminopimeloyl-D-alanyl-D-alanine + UDP + H(+). It participates in cell wall biogenesis; peptidoglycan biosynthesis. Functionally, cell wall formation. Catalyzes the transfer of a GlcNAc subunit on undecaprenyl-pyrophosphoryl-MurNAc-pentapeptide (lipid intermediate I) to form undecaprenyl-pyrophosphoryl-MurNAc-(pentapeptide)GlcNAc (lipid intermediate II). The sequence is that of UDP-N-acetylglucosamine--N-acetylmuramyl-(pentapeptide) pyrophosphoryl-undecaprenol N-acetylglucosamine transferase 1 from Bacillus cereus (strain ATCC 14579 / DSM 31 / CCUG 7414 / JCM 2152 / NBRC 15305 / NCIMB 9373 / NCTC 2599 / NRRL B-3711).